We begin with the raw amino-acid sequence, 429 residues long: Enolase (429 aa).

Glutamine 167 serves as a coordination point for (2R)-2-phosphoglycerate. Glutamate 209 functions as the Proton donor in the catalytic mechanism. Positions 246, 289, and 316 each coordinate Mg(2+). Residues lysine 341, arginine 370, serine 371, and lysine 392 each coordinate (2R)-2-phosphoglycerate. The active-site Proton acceptor is lysine 341.

Belongs to the enolase family. As to quaternary structure, component of the RNA degradosome, a multiprotein complex involved in RNA processing and mRNA degradation. The cofactor is Mg(2+).

The protein localises to the cytoplasm. It is found in the secreted. Its subcellular location is the cell surface. The catalysed reaction is (2R)-2-phosphoglycerate = phosphoenolpyruvate + H2O. It participates in carbohydrate degradation; glycolysis; pyruvate from D-glyceraldehyde 3-phosphate: step 4/5. Catalyzes the reversible conversion of 2-phosphoglycerate (2-PG) into phosphoenolpyruvate (PEP). It is essential for the degradation of carbohydrates via glycolysis. In Pseudomonas entomophila (strain L48), this protein is Enolase.